The sequence spans 374 residues: Heme A synthase (374 aa).

Positions 1–22 (MSDHIRAASSPSRHGSEHGWQH) are disordered. 5 helical membrane-spanning segments follow: residues 32–52 (ILVA…VMLG), 118–138 (RLWG…LAVT), 149–169 (LILI…MVAS), 184–204 (VVHL…ALSV), and 226–246 (LGLV…HAGL). Residue histidine 281 participates in heme binding. 3 helical membrane passes run 283-300 (LLAT…LIGF), 309-329 (AVLP…ATLL), and 332-352 (VAVP…TAAI). Residue histidine 340 participates in heme binding.

It belongs to the COX15/CtaA family. Type 2 subfamily. In terms of assembly, interacts with CtaB. Heme b is required as a cofactor.

The protein resides in the cell membrane. The catalysed reaction is Fe(II)-heme o + 2 A + H2O = Fe(II)-heme a + 2 AH2. Its pathway is porphyrin-containing compound metabolism; heme A biosynthesis; heme A from heme O: step 1/1. Its function is as follows. Catalyzes the conversion of heme O to heme A by two successive hydroxylations of the methyl group at C8. The first hydroxylation forms heme I, the second hydroxylation results in an unstable dihydroxymethyl group, which spontaneously dehydrates, resulting in the formyl group of heme A. The sequence is that of Heme A synthase from Granulibacter bethesdensis (strain ATCC BAA-1260 / CGDNIH1).